A 969-amino-acid polypeptide reads, in one-letter code: Integrator complex subunit 4 (969 aa).

HEAT repeat units follow at residues 68-107 (AESV…TAGF), 147-185 (VSHR…VEAS), 192-230 (NAVA…RGLK), 231-265 (LQQA…SQLY), 279-315 (IRLV…LQVS), 371-407 (NLID…ARSS), 408-446 (APFA…NITL), and 448-486 (EDQL…CIQL). Residues 928–949 (RASNSTWGESTETVPSTESSTE) show a composition bias toward low complexity. The disordered stretch occupies residues 928–950 (RASNSTWGESTETVPSTESSTEG).

The protein belongs to the Integrator subunit 4 family. As to quaternary structure, component of the Integrator complex, composed of core subunits INTS1, INTS2, INTS3, INTS4, INTS5, INTS6, INTS7, INTS8, INTS9/RC74, INTS10, INTS11/CPSF3L, INTS12, INTS13, INTS14 and INTS15. The core complex associates with protein phosphatase 2A subunits PPP2CA and PPP2R1A, to form the Integrator-PP2A (INTAC) complex. INTS4 is part of the RNA endonuclease subcomplex, composed of INTS4, INTS9, INTS11 and inositol hexakisphosphate (InsP6).

It localises to the nucleus. The protein localises to the cytoplasm. In terms of biological role, component of the integrator complex, a multiprotein complex that terminates RNA polymerase II (Pol II) transcription in the promoter-proximal region of genes. The integrator complex provides a quality checkpoint during transcription elongation by driving premature transcription termination of transcripts that are unfavorably configured for transcriptional elongation: the complex terminates transcription by (1) catalyzing dephosphorylation of the C-terminal domain (CTD) of Pol II subunit POLR2A/RPB1 and SUPT5H/SPT5, (2) degrading the exiting nascent RNA transcript via endonuclease activity and (3) promoting the release of Pol II from bound DNA. The integrator complex is also involved in terminating the synthesis of non-coding Pol II transcripts, such as enhancer RNAs (eRNAs), small nuclear RNAs (snRNAs), telomerase RNAs and long non-coding RNAs (lncRNAs). This is Integrator complex subunit 4 (ints4) from Xenopus laevis (African clawed frog).